A 161-amino-acid chain; its full sequence is Short form salivary protein D7S (161 aa).

A signal peptide spans 1 to 18 (MKFPSILLAILLFKPITA). 3 disulfide bridges follow: Cys33-Cys67, Cys47-Cys155, and Cys109-Cys125.

It belongs to the PBP/GOBP family.

It is found in the secreted. Functionally, in contrast to the related D7 salivary proteins, does not bind serotonin. This is Short form salivary protein D7S from Culex quinquefasciatus (Southern house mosquito).